We begin with the raw amino-acid sequence, 380 residues long: Ribosomal RNA large subunit methyltransferase F (380 aa).

2 disordered regions span residues M1 to A54 and S260 to K279. The segment covering Q21 to K32 has biased composition (low complexity). A compositionally biased stretch (basic residues) spans Q44 to N53. A compositionally biased stretch (low complexity) spans S260–S270.

Belongs to the methyltransferase superfamily. METTL16/RlmF family.

Its subcellular location is the cytoplasm. The catalysed reaction is adenosine(1618) in 23S rRNA + S-adenosyl-L-methionine = N(6)-methyladenosine(1618) in 23S rRNA + S-adenosyl-L-homocysteine + H(+). Specifically methylates the adenine in position 1618 of 23S rRNA. The protein is Ribosomal RNA large subunit methyltransferase F of Shewanella pealeana (strain ATCC 700345 / ANG-SQ1).